Reading from the N-terminus, the 240-residue chain is Phosphoribosylaminoimidazole-succinocarboxamide synthase (240 aa).

The protein belongs to the SAICAR synthetase family.

The catalysed reaction is 5-amino-1-(5-phospho-D-ribosyl)imidazole-4-carboxylate + L-aspartate + ATP = (2S)-2-[5-amino-1-(5-phospho-beta-D-ribosyl)imidazole-4-carboxamido]succinate + ADP + phosphate + 2 H(+). The protein operates within purine metabolism; IMP biosynthesis via de novo pathway; 5-amino-1-(5-phospho-D-ribosyl)imidazole-4-carboxamide from 5-amino-1-(5-phospho-D-ribosyl)imidazole-4-carboxylate: step 1/2. The chain is Phosphoribosylaminoimidazole-succinocarboxamide synthase from Pyrobaculum calidifontis (strain DSM 21063 / JCM 11548 / VA1).